A 97-amino-acid chain; its full sequence is Large ribosomal subunit protein eL21 (97 aa).

It belongs to the eukaryotic ribosomal protein eL21 family.

In Methanosarcina mazei (strain ATCC BAA-159 / DSM 3647 / Goe1 / Go1 / JCM 11833 / OCM 88) (Methanosarcina frisia), this protein is Large ribosomal subunit protein eL21.